Here is a 259-residue protein sequence, read N- to C-terminus: Thiazole synthase (259 aa).

Lys95 functions as the Schiff-base intermediate with DXP in the catalytic mechanism. 1-deoxy-D-xylulose 5-phosphate contacts are provided by residues Gly156, 183-184 (AG), and 205-206 (NS).

It belongs to the ThiG family. As to quaternary structure, homotetramer. Forms heterodimers with either ThiH or ThiS.

It localises to the cytoplasm. The enzyme catalyses [ThiS sulfur-carrier protein]-C-terminal-Gly-aminoethanethioate + 2-iminoacetate + 1-deoxy-D-xylulose 5-phosphate = [ThiS sulfur-carrier protein]-C-terminal Gly-Gly + 2-[(2R,5Z)-2-carboxy-4-methylthiazol-5(2H)-ylidene]ethyl phosphate + 2 H2O + H(+). The protein operates within cofactor biosynthesis; thiamine diphosphate biosynthesis. Catalyzes the rearrangement of 1-deoxy-D-xylulose 5-phosphate (DXP) to produce the thiazole phosphate moiety of thiamine. Sulfur is provided by the thiocarboxylate moiety of the carrier protein ThiS. In vitro, sulfur can be provided by H(2)S. This is Thiazole synthase from Coxiella burnetii (strain CbuK_Q154) (Coxiella burnetii (strain Q154)).